A 238-amino-acid polypeptide reads, in one-letter code: Protein E6 (238 aa).

The segment covering 40-51 has biased composition (basic and acidic residues); the sequence is KETTTREQKHET. Disordered stretches follow at residues 40-64 and 210-238; these read KETT…EEQE and EFNE…EFEP. Acidic residues predominate over residues 227–238; the sequence is EEFEESEEEFEP.

As to expression, it is predominantly expressed in fiber cells.

Its subcellular location is the secreted. The protein resides in the cell wall. The chain is Protein E6 (E6) from Gossypium hirsutum (Upland cotton).